The primary structure comprises 535 residues: 4-hydroxy-3-methylbut-2-enyl diphosphate reductase, apicoplast (535 aa).

Cysteine 231 is a binding site for [4Fe-4S] cluster. 2 residues coordinate (2E)-4-hydroxy-3-methylbut-2-enyl diphosphate: histidine 260 and histidine 293. Positions 260 and 293 each coordinate dimethylallyl diphosphate. Positions 260 and 293 each coordinate isopentenyl diphosphate. Position 315 (cysteine 315) interacts with [4Fe-4S] cluster. Residue histidine 343 participates in (2E)-4-hydroxy-3-methylbut-2-enyl diphosphate binding. A dimethylallyl diphosphate-binding site is contributed by histidine 343. Isopentenyl diphosphate is bound at residue histidine 343. Glutamate 345 acts as the Proton donor in catalysis. Threonine 383 provides a ligand contact to (2E)-4-hydroxy-3-methylbut-2-enyl diphosphate. Cysteine 413 provides a ligand contact to [4Fe-4S] cluster. The (2E)-4-hydroxy-3-methylbut-2-enyl diphosphate site is built by serine 441, serine 442, asparagine 443, and serine 485. Positions 441, 442, 443, and 485 each coordinate dimethylallyl diphosphate. Isopentenyl diphosphate is bound by residues serine 441, serine 442, asparagine 443, and serine 485.

It belongs to the IspH family. As to quaternary structure, interacts with Fd/ferredoxin. [4Fe-4S] cluster serves as cofactor.

Its subcellular location is the plastid. The protein localises to the apicoplast. The enzyme catalyses dimethylallyl diphosphate + 2 oxidized [2Fe-2S]-[ferredoxin] + H2O = (2E)-4-hydroxy-3-methylbut-2-enyl diphosphate + 2 reduced [2Fe-2S]-[ferredoxin] + 2 H(+). The catalysed reaction is isopentenyl diphosphate + 2 oxidized [2Fe-2S]-[ferredoxin] + H2O = (2E)-4-hydroxy-3-methylbut-2-enyl diphosphate + 2 reduced [2Fe-2S]-[ferredoxin] + 2 H(+). It functions in the pathway isoprenoid biosynthesis; dimethylallyl diphosphate biosynthesis; dimethylallyl diphosphate from (2E)-4-hydroxy-3-methylbutenyl diphosphate: step 1/1. Its pathway is isoprenoid biosynthesis; isopentenyl diphosphate biosynthesis via DXP pathway; isopentenyl diphosphate from 1-deoxy-D-xylulose 5-phosphate: step 6/6. Functionally, catalyzes the conversion of 1-hydroxy-2-methyl-2-(E)-butenyl 4-diphosphate (HMBPP) into a mixture of isopentenyl diphosphate (IPP) and dimethylallyl diphosphate (DMAPP). Acts in the terminal step of the DOXP/MEP pathway for isoprenoid precursor biosynthesis. This is 4-hydroxy-3-methylbut-2-enyl diphosphate reductase, apicoplast from Plasmodium falciparum (isolate 3D7).